The primary structure comprises 20 residues: Protein PR-L5 (20 aa).

Belongs to the BetVI family.

This is Protein PR-L5 from Lupinus luteus (European yellow lupine).